We begin with the raw amino-acid sequence, 404 residues long: Rhomboid-related protein 3 (404 aa).

2 EF-hand domains span residues Ala-34 to Lys-69 and Leu-70 to Asn-105. A run of 7 helical transmembrane segments spans residues Trp-164–Leu-184, Leu-227–Ala-247, Ile-250–Met-270, Val-274–Met-294, Leu-305–Trp-324, Pro-338–Leu-358, and Trp-371–Phe-391. Residue Ser-278 is the Nucleophile of the active site. His-343 is an active-site residue.

The protein belongs to the peptidase S54 family.

The protein resides in the membrane. It catalyses the reaction Cleaves type-1 transmembrane domains using a catalytic dyad composed of serine and histidine that are contributed by different transmembrane domains.. In terms of biological role, may be involved in regulated intramembrane proteolysis and the subsequent release of functional polypeptides from their membrane anchors. The sequence is that of Rhomboid-related protein 3 (Rhbdl3) from Mus musculus (Mouse).